We begin with the raw amino-acid sequence, 98 residues long: Putative pterin-4-alpha-carbinolamine dehydratase (98 aa).

The protein belongs to the pterin-4-alpha-carbinolamine dehydratase family.

It carries out the reaction (4aS,6R)-4a-hydroxy-L-erythro-5,6,7,8-tetrahydrobiopterin = (6R)-L-erythro-6,7-dihydrobiopterin + H2O. This Mesorhizobium japonicum (strain LMG 29417 / CECT 9101 / MAFF 303099) (Mesorhizobium loti (strain MAFF 303099)) protein is Putative pterin-4-alpha-carbinolamine dehydratase.